We begin with the raw amino-acid sequence, 118 residues long: UPF0251 protein TTE1845 (118 aa).

The protein belongs to the UPF0251 family.

The polypeptide is UPF0251 protein TTE1845 (Caldanaerobacter subterraneus subsp. tengcongensis (strain DSM 15242 / JCM 11007 / NBRC 100824 / MB4) (Thermoanaerobacter tengcongensis)).